A 206-amino-acid chain; its full sequence is Small ribosomal subunit protein uS4A (206 aa).

An S4 RNA-binding domain is found at 98–163 (MRLDNVVYRL…SERFKMFAEN (66 aa)).

This sequence belongs to the universal ribosomal protein uS4 family. Part of the 30S ribosomal subunit. Contacts protein S5. The interaction surface between S4 and S5 is involved in control of translational fidelity.

Its function is as follows. One of the primary rRNA binding proteins, it binds directly to 16S rRNA where it nucleates assembly of the body of the 30S subunit. In terms of biological role, with S5 and S12 plays an important role in translational accuracy. The sequence is that of Small ribosomal subunit protein uS4A from Clostridium perfringens (strain SM101 / Type A).